Reading from the N-terminus, the 1032-residue chain is tRNA wybutosine-synthesizing protein 4 (1032 aa).

S-adenosyl-L-methionine contacts are provided by residues R69, G95, D122, 169–170, and E196; that span reads DL. A disordered region spans residues 702–726; it reads ESVEPNKSQSEKATSKPSAQSQNEP. Residues 716–725 show a composition bias toward polar residues; sequence SKPSAQSQNE. In terms of domain architecture, JmjC spans 833–988; it reads PTKLPANLAV…AAGRDVYGNR (156 aa).

The protein belongs to the methyltransferase superfamily. LCMT family.

It carries out the reaction 7-[(3S)-3-amino-3-carboxypropyl]wyosine(37) in tRNA(Phe) + S-adenosyl-L-methionine = 7-[(3S)-(3-amino-3-methoxycarbonyl)propyl]wyosine(37) in tRNA(Phe) + S-adenosyl-L-homocysteine. The enzyme catalyses 7-[(3S)-(3-amino-3-methoxycarbonyl)propyl]wyosine(37) in tRNA(Phe) + S-adenosyl-L-methionine + CO2 = wybutosine(37) in tRNA(Phe) + S-adenosyl-L-homocysteine + 2 H(+). It functions in the pathway tRNA modification; wybutosine-tRNA(Phe) biosynthesis. In terms of biological role, probable S-adenosyl-L-methionine-dependent methyltransferase that acts as a component of the wybutosine biosynthesis pathway. Wybutosine is a hyper modified guanosine with a tricyclic base found at the 3'-position adjacent to the anticodon of eukaryotic phenylalanine tRNA. May methylate the carboxyl group of leucine residues to form alpha-leucine ester residues. This chain is tRNA wybutosine-synthesizing protein 4 (ppm2), found in Aspergillus oryzae (strain ATCC 42149 / RIB 40) (Yellow koji mold).